The primary structure comprises 287 residues: U1 small nuclear ribonucleoprotein A (287 aa).

Positions 16 to 95 (HTIYINNLNE…KPMRIQYAKT (80 aa)) constitute an RRM 1 domain. An N6-acetyllysine modification is found at Lys-66. A disordered region spans residues 106–134 (TYVERDRKREKRKPKSQETPAAKKAVQGG). A compositionally biased stretch (low complexity) spans 125 to 134 (PAAKKAVQGG). Arg-157 carries the omega-N-methylarginine modification. In terms of domain architecture, RRM 2 spans 213–287 (HILFLTNLPE…NAMKISFAKK (75 aa)).

This sequence belongs to the RRM U1 A/B'' family. As to quaternary structure, U1 snRNP is composed of the 7 core Sm proteins SNRPB, SNRPD1, SNRPD2, SNRPD3, SNRPE, SNRPF and SNRPG that assemble in a heptameric protein ring on the Sm site of the small nuclear RNA to form the core snRNP, and at least three U1 snRNP-specific proteins SNRNP70/U1-70K, SNRPA/U1-A and SNRPC/U1-C. Interacts with SFPQ; component of a snRNP-free complex with SFPQ. Interacts with IVNS1ABP (via BACK domain); the interaction is indirect.

It is found in the nucleus. Component of the spliceosomal U1 snRNP, which is essential for recognition of the pre-mRNA 5' splice-site and the subsequent assembly of the spliceosome. U1 snRNP is the first snRNP to interact with pre-mRNA. This interaction is required for the subsequent binding of U2 snRNP and the U4/U6/U5 tri-snRNP. SNRPA binds stem loop II of U1 snRNA. In a snRNP-free form (SF-A) may be involved in coupled pre-mRNA splicing and polyadenylation process. May bind preferentially to the 5'-UGCAC-3' motif on RNAs. The polypeptide is U1 small nuclear ribonucleoprotein A (Snrpa) (Mus musculus (Mouse)).